A 196-amino-acid chain; its full sequence is FKBP-type peptidyl-prolyl cis-trans isomerase SlyD (196 aa).

The tract at residues M1 to G69 is PPIase first part. The PPIase FKBP-type domain occupies M1–R95. The segment at V76–D120 is IF-chaperone. The interval N129 to H151 is PPIase second part. Residues C167, C168, C184, C185, C193, and C195 each coordinate Ni(2+).

This sequence belongs to the FKBP-type PPIase family. As to quaternary structure, monomer. Binds to a broad range of unrelated Tat signal sequences. Interacts with the hydrogenase nickel incorporation protein HypB.

It localises to the cytoplasm. It carries out the reaction [protein]-peptidylproline (omega=180) = [protein]-peptidylproline (omega=0). Functionally, folding helper with both chaperone and peptidyl-prolyl cis-trans isomerase (PPIase) activities. Chaperone activity prevents aggregation of unfolded or partially folded proteins and promotes their correct folding. PPIases catalyze the cis-trans isomerization of Xaa-Pro bonds of peptides, which accelerates slow steps of protein folding and thus shortens the lifetime of intermediates. Both strategies lower the concentration of intermediates and increase the productivity and yield of the folding reaction. SlyD could be involved in Tat-dependent translocation, by binding to the Tat-type signal of folded proteins. Also involved in hydrogenase metallocenter assembly, probably by participating in the nickel insertion step. This function in hydrogenase biosynthesis requires chaperone activity and the presence of the metal-binding domain, but not PPIase activity. This is FKBP-type peptidyl-prolyl cis-trans isomerase SlyD (slyD) from Escherichia coli O157:H7.